Here is a 315-residue protein sequence, read N- to C-terminus: Heme oxygenase 2 (315 aa).

Residues 1–12 are compositionally biased toward acidic residues; it reads MSSEVETSEGVD. The interval 1–28 is disordered; that stretch reads MSSEVETSEGVDESEKNSMAPEKENHTK. Ser2 is subject to N-acetylserine. Residue Ser2 is modified to Phosphoserine. Residues 2–294 are Cytoplasmic-facing; that stretch reads SSEVETSEGV…TTVAVLRKPS (293 aa). Basic and acidic residues predominate over residues 13-28; the sequence is ESEKNSMAPEKENHTK. Residues His44, Tyr153, Lys198, and Arg202 each coordinate heme b. 2 HRM repeats span residues 263 to 268 and 280 to 285; these read KCPFYA and NCPFQT. Cys264 and Cys281 each carry S-nitrosocysteine. Residues 295–315 traverse the membrane as a helical; Anchor for type IV membrane protein segment; the sequence is LQLILAASVALVAGLLAWYYM.

Belongs to the heme oxygenase family. Post-translationally, a soluble form arises by proteolytic removal of the membrane anchor. In terms of processing, S-nitrosylated by BLVRB. Ubiquitous.

It is found in the microsome membrane. Its subcellular location is the endoplasmic reticulum membrane. It carries out the reaction heme b + 3 reduced [NADPH--hemoprotein reductase] + 3 O2 = biliverdin IXalpha + CO + Fe(2+) + 3 oxidized [NADPH--hemoprotein reductase] + 3 H2O + H(+). Its function is as follows. Catalyzes the oxidative cleavage of heme at the alpha-methene bridge carbon, released as carbon monoxide (CO), to generate biliverdin IXalpha, while releasing the central heme iron chelate as ferrous iron. In Mus musculus (Mouse), this protein is Heme oxygenase 2 (Hmox2).